A 145-amino-acid polypeptide reads, in one-letter code: D-aminoacyl-tRNA deacylase (145 aa).

The short motif at 137-138 is the Gly-cisPro motif, important for rejection of L-amino acids element; it reads GP.

Belongs to the DTD family. In terms of assembly, homodimer.

It is found in the cytoplasm. The enzyme catalyses glycyl-tRNA(Ala) + H2O = tRNA(Ala) + glycine + H(+). It catalyses the reaction a D-aminoacyl-tRNA + H2O = a tRNA + a D-alpha-amino acid + H(+). An aminoacyl-tRNA editing enzyme that deacylates mischarged D-aminoacyl-tRNAs. Also deacylates mischarged glycyl-tRNA(Ala), protecting cells against glycine mischarging by AlaRS. Acts via tRNA-based rather than protein-based catalysis; rejects L-amino acids rather than detecting D-amino acids in the active site. By recycling D-aminoacyl-tRNA to D-amino acids and free tRNA molecules, this enzyme counteracts the toxicity associated with the formation of D-aminoacyl-tRNA entities in vivo and helps enforce protein L-homochirality. This chain is D-aminoacyl-tRNA deacylase, found in Sodalis glossinidius (strain morsitans).